The chain runs to 227 residues: Phosphatidylserine decarboxylase proenzyme (227 aa).

Ser-184 functions as the Schiff-base intermediate with substrate; via pyruvic acid in the catalytic mechanism. At Ser-184 the chain carries Pyruvic acid (Ser); by autocatalysis.

It belongs to the phosphatidylserine decarboxylase family. PSD-A subfamily. Heterodimer of a large membrane-associated beta subunit and a small pyruvoyl-containing alpha subunit. It depends on pyruvate as a cofactor. Post-translationally, is synthesized initially as an inactive proenzyme. Formation of the active enzyme involves a self-maturation process in which the active site pyruvoyl group is generated from an internal serine residue via an autocatalytic post-translational modification. Two non-identical subunits are generated from the proenzyme in this reaction, and the pyruvate is formed at the N-terminus of the alpha chain, which is derived from the carboxyl end of the proenzyme. The post-translation cleavage follows an unusual pathway, termed non-hydrolytic serinolysis, in which the side chain hydroxyl group of the serine supplies its oxygen atom to form the C-terminus of the beta chain, while the remainder of the serine residue undergoes an oxidative deamination to produce ammonia and the pyruvoyl prosthetic group on the alpha chain.

It is found in the cell membrane. The catalysed reaction is a 1,2-diacyl-sn-glycero-3-phospho-L-serine + H(+) = a 1,2-diacyl-sn-glycero-3-phosphoethanolamine + CO2. It functions in the pathway phospholipid metabolism; phosphatidylethanolamine biosynthesis; phosphatidylethanolamine from CDP-diacylglycerol: step 2/2. Its function is as follows. Catalyzes the formation of phosphatidylethanolamine (PtdEtn) from phosphatidylserine (PtdSer). This Ehrlichia ruminantium (strain Welgevonden) protein is Phosphatidylserine decarboxylase proenzyme.